The sequence spans 204 residues: Protein C (204 aa).

Residues 1-78 are disordered; the sequence is MPSFLRGILK…TEQSQRRPKI (78 aa). The span at 10–20 shows a compositional bias: basic and acidic residues; that stretch reads KPKERHHENKN. The segment covering 25–34 has biased composition (low complexity); sequence SSDSLTSSYP.

Belongs to the respirovirus protein C family.

The protein is Protein C (P/V/C) of Homo sapiens (Human).